A 93-amino-acid polypeptide reads, in one-letter code: Small ribosomal subunit protein uS19 (93 aa).

The protein belongs to the universal ribosomal protein uS19 family.

Its function is as follows. Protein S19 forms a complex with S13 that binds strongly to the 16S ribosomal RNA. The chain is Small ribosomal subunit protein uS19 from Thermoanaerobacter pseudethanolicus (strain ATCC 33223 / 39E) (Clostridium thermohydrosulfuricum).